Here is a 928-residue protein sequence, read N- to C-terminus: 2-oxoglutarate dehydrogenase E1 component (928 aa).

Belongs to the alpha-ketoglutarate dehydrogenase family. Homodimer. Part of the 2-oxoglutarate dehydrogenase (OGDH) complex composed of E1 (2-oxoglutarate dehydrogenase), E2 (dihydrolipoamide succinyltransferase) and E3 (dihydrolipoamide dehydrogenase); the complex contains multiple copies of the three enzymatic components (E1, E2 and E3). Requires thiamine diphosphate as cofactor.

It catalyses the reaction N(6)-[(R)-lipoyl]-L-lysyl-[protein] + 2-oxoglutarate + H(+) = N(6)-[(R)-S(8)-succinyldihydrolipoyl]-L-lysyl-[protein] + CO2. In terms of biological role, E1 component of the 2-oxoglutarate dehydrogenase (OGDH) complex which catalyzes the decarboxylation of 2-oxoglutarate, the first step in the conversion of 2-oxoglutarate to succinyl-CoA and CO(2). This chain is 2-oxoglutarate dehydrogenase E1 component (sucA), found in Rickettsia conorii (strain ATCC VR-613 / Malish 7).